A 383-amino-acid chain; its full sequence is Probable cytosolic iron-sulfur protein assembly protein 1 (383 aa).

7 WD repeats span residues alanine 10 to leucine 49, threonine 56 to aspartate 108, glycine 135 to glutamate 175, aspartate 182 to serine 221, glycine 228 to glutamate 275, valine 302 to isoleucine 341, and histidine 349 to isoleucine 383.

This sequence belongs to the WD repeat CIA1 family. As to quaternary structure, interacts with NAR1.

It is found in the cytoplasm. It localises to the nucleus. In terms of biological role, essential component of the cytosolic iron-sulfur (Fe/S) protein assembly machinery. Required for the maturation of extramitochondrial Fe/S proteins. This chain is Probable cytosolic iron-sulfur protein assembly protein 1, found in Candida albicans (strain SC5314 / ATCC MYA-2876) (Yeast).